We begin with the raw amino-acid sequence, 596 residues long: Signal peptide peptidase-like 2B (596 aa).

The first 21 residues, 1–21, serve as a signal peptide directing secretion; sequence MAARWAQFLLFSLLSLPQVYC. Residues 22-170 lie on the Lumenal side of the membrane; the sequence is EYGMVHVLSE…APNEPVLDYN (149 aa). Residues 53 to 147 enclose the PA domain; the sequence is HDLGKASLLQ…LLSYSDMLDI (95 aa). The N-linked (GlcNAc...) asparagine glycan is linked to N93. A helical transmembrane segment spans residues 171–191; it reads MVIIFVMAVGTVAIGGYWAGS. Residues 192 to 219 are Cytoplasmic-facing; the sequence is RDVKERYMKHKRDDGAEKHEDETVDVTP. A helical membrane pass occupies residues 220–240; sequence IMICVFVVMCCSMLVLLYFFY. The Lumenal segment spans residues 241–242; the sequence is DH. A helical membrane pass occupies residues 243–263; the sequence is LVYVIIGIFCLAASIGLYSCL. At 264–289 the chain is on the cytoplasmic side; it reads SPFVRRFPLGKCRIPDNNLPYFHKRP. A helical transmembrane segment spans residues 290–310; the sequence is QVRILLLAVFCISVSVVWGVF. The Lumenal portion of the chain corresponds to 311 to 315; it reads RNEDQ. Residues 316 to 336 form a helical membrane-spanning segment; it reads WAWVLQDALGIAFCLYMLKTI. Topologically, residues 337 to 344 are cytoplasmic; it reads RLPTFKGC. The helical transmembrane segment at 345 to 365 threads the bilayer; sequence TLLLLVLFVYDVFFVFITPFL. Residue D355 is part of the active site. Over 366–408 the chain is Lumenal; sequence TKTGESIMVEVAAGPSDSATHEKLPMVLKVPRLNSSPLALCDR. Residues 409–429 traverse the membrane as a helical segment; that stretch reads PFSLLGFGDILVPGLLVAYCH. The active site involves D417. Topologically, residues 430–441 are cytoplasmic; it reads RFDIQVQSSRVY. A helical membrane pass occupies residues 442–462; the sequence is FVACTIAYGIGLLVTFVALAL. Residues 463 to 466 are Lumenal-facing; sequence MQMG. Residues 467–487 traverse the membrane as a helical segment; the sequence is QPALLYLVPCTLITSFSVALW. The PAL motif lies at 468-470; the sequence is PAL. Residues 488 to 596 are Cytoplasmic-facing; that stretch reads RKELAMFWTG…SLNLEQKQLE (109 aa). Residues 543–596 form a disordered region; that stretch reads KELHSPTLAAEEPADNDTKTEQSEVSIAQSEEAAGHNKDDLESKSLNLEQKQLE. A compositionally biased stretch (basic and acidic residues) spans 575–585; that stretch reads AAGHNKDDLES. Residues 586–596 show a composition bias toward polar residues; that stretch reads KSLNLEQKQLE.

It belongs to the peptidase A22B family.

The protein resides in the cell membrane. It is found in the golgi apparatus membrane. Its subcellular location is the lysosome membrane. The protein localises to the endosome membrane. It localises to the membrane. Functionally, intramembrane-cleaving aspartic protease (I-CLiP) that cleaves type II membrane signal peptides in the hydrophobic plane of the membrane. The chain is Signal peptide peptidase-like 2B from Gallus gallus (Chicken).